A 659-amino-acid chain; its full sequence is WD repeat-containing protein 48 homolog (659 aa).

WD repeat units lie at residues 27-66 (RHRNGVNALQLDTINGRLYSAGRDAIIRVWNSMQNNSQEP), 73-112 (HHNDWVNDIVLCCGGRNLISASCDTTVKVWNAHKGFCMST), 115-154 (THRDYVQALAYAKDREQVASAGLDKAIFLWDINTLTALTA), 166-205 (GSKDSIYSLAMNPSGTVIVCGSTENTLRIWDPRTCNKIAK), 208-247 (GHAENVKALVVSEDGQHVISGSSDGKIKQWSIGQQRCVQT), 250-289 (VHSEGVWALLMTDNFSHVISGSRDKKIIMTDLRNPTNSVL), 292-331 (EERAPVLSLCYNYDQTGVWATTWNSDIRCWKLNPSEKLSF), and 337-376 (KGGAAIKKYHVLNDKRFMLTKDSEMNVAIYDVLKVKKVED). The disordered stretch occupies residues 592-613 (ASTGNSNSSQNNSQSDANSEGS). Low complexity predominate over residues 596–610 (NSNSSQNNSQSDANS).

The protein belongs to the WD repeat WDR48 family. In terms of assembly, catalytic component of the Usp12-46 deubiquitylase complex consisting of Usp12-46, Wdr20 and Uaf1; regulatory subunit that, together wtih Wdr20, stabilizes Usp12-46. The Usp12-46 deubiquitylase complex associates with arr/arrow; the interaction leads to deubiquitination and stabilization of arr/arrow.

In terms of biological role, regulatory component of the Usp12-46 deubiquitylase complex. activates deubiquitination by increasing the catalytic turnover without increasing the affinity of deubiquitinating enzymes for the substrate. The complex deubiquitylates the wg/wingless-signaling receptor arr/arrow, which stabilizes the receptor and increases its concentration at the cell surface; this enhances the sensitivity of cells to wg/wingless-signal stimulation. This increases the amplitude and spatial range of the signaling response to the wg/wingless morphogen gradient, facilitating the precise concentration-dependent regulation of its target genes. Together with Wdr20 and Usp12-46 required for wg/wingless-mediated signaling in the wing imaginal disc and for wg/wingless-dependent regulation of intestinal stem cell proliferation. This Aedes aegypti (Yellowfever mosquito) protein is WD repeat-containing protein 48 homolog.